The following is a 236-amino-acid chain: Mitochondrial coenzyme A diphosphatase NUDT8 (236 aa).

The 148-residue stretch at 25 to 172 (LRARPASAAV…HFRYTLPVFL (148 aa)) folds into the Nudix hydrolase domain. Lys70 is subject to N6-succinyllysine. The short motif at 70–91 (KCDPADQDVVHTALRETREELG) is the Nudix box element. Residues Glu85 and Glu89 each coordinate Mg(2+).

It belongs to the Nudix hydrolase family. Monomer. It depends on Mg(2+) as a cofactor. Mn(2+) is required as a cofactor.

It is found in the mitochondrion. The enzyme catalyses an acyl-CoA + H2O = an acyl-4'-phosphopantetheine + adenosine 3',5'-bisphosphate + 2 H(+). It carries out the reaction CoA + H2O = (R)-4'-phosphopantetheine + adenosine 3',5'-bisphosphate + 2 H(+). It catalyses the reaction acetyl-CoA + H2O = S-acetyl-4'-phosphopantetheine + adenosine 3',5'-bisphosphate + 2 H(+). The catalysed reaction is butanoyl-CoA + H2O = S-butanoyl-4'-phosphopantetheine + adenosine 3',5'-bisphosphate + 2 H(+). The enzyme catalyses hexanoyl-CoA + H2O = hexanoyl-4'-phosphopantetheine + adenosine 3',5'-bisphosphate + 2 H(+). It carries out the reaction octanoyl-CoA + H2O = S-octanoyl-4'-phosphopantetheine + adenosine 3',5'-bisphosphate + 2 H(+). It catalyses the reaction propanoyl-CoA + H2O = propanoyl-4'-phosphopantetheine + adenosine 3',5'-bisphosphate + 2 H(+). The catalysed reaction is malonyl-CoA + H2O = malonyl-4'-phosphopantetheine + adenosine 3',5'-bisphosphate + 2 H(+). The enzyme catalyses succinyl-CoA + H2O = succinyl-4'-phosphopantetheine + adenosine 3',5'-bisphosphate + 2 H(+). It carries out the reaction a 5'-end CoA-ribonucleoside in mRNA + H2O = a 5'-end phospho-adenosine-phospho-ribonucleoside in mRNA + (R)-4'-phosphopantetheine + 2 H(+). Functionally, acyl-CoA diphosphatase that mediates the hydrolysis of a wide range of CoA and CoA esters yielding 3',5'-ADP and the corresponding 4'-phosphopantetheine derivative as products. Hydrolyzes short- and medium-chain acyl-CoAs, exhibiting the highest activity toward free CoA, hexanoyl-CoA, and octanoyl-CoA and the lowest activity against acetyl-CoA. Exhibits decapping activity towards dpCoA-capped RNAs in vitro. The chain is Mitochondrial coenzyme A diphosphatase NUDT8 (NUDT8) from Homo sapiens (Human).